We begin with the raw amino-acid sequence, 156 residues long: 6,7-dimethyl-8-ribityllumazine synthase (156 aa).

Residues Phe23, 57–59, and 81–83 contribute to the 5-amino-6-(D-ribitylamino)uracil site; these read AFE and AVI. 86–87 provides a ligand contact to (2S)-2-hydroxy-3-oxobutyl phosphate; sequence ST. The active-site Proton donor is the His89. Phe114 is a 5-amino-6-(D-ribitylamino)uracil binding site. Arg128 is a binding site for (2S)-2-hydroxy-3-oxobutyl phosphate.

Belongs to the DMRL synthase family.

The enzyme catalyses (2S)-2-hydroxy-3-oxobutyl phosphate + 5-amino-6-(D-ribitylamino)uracil = 6,7-dimethyl-8-(1-D-ribityl)lumazine + phosphate + 2 H2O + H(+). It functions in the pathway cofactor biosynthesis; riboflavin biosynthesis; riboflavin from 2-hydroxy-3-oxobutyl phosphate and 5-amino-6-(D-ribitylamino)uracil: step 1/2. In terms of biological role, catalyzes the formation of 6,7-dimethyl-8-ribityllumazine by condensation of 5-amino-6-(D-ribitylamino)uracil with 3,4-dihydroxy-2-butanone 4-phosphate. This is the penultimate step in the biosynthesis of riboflavin. The protein is 6,7-dimethyl-8-ribityllumazine synthase of Campylobacter curvus (strain 525.92).